Consider the following 94-residue polypeptide: Large ribosomal subunit protein bL27 (94 aa).

A propeptide spanning residues 1–9 (MLKMNLQFF) is cleaved from the precursor.

The protein belongs to the bacterial ribosomal protein bL27 family. The N-terminus is cleaved by ribosomal processing cysteine protease Prp.

In Halalkalibacterium halodurans (strain ATCC BAA-125 / DSM 18197 / FERM 7344 / JCM 9153 / C-125) (Bacillus halodurans), this protein is Large ribosomal subunit protein bL27.